A 565-amino-acid chain; its full sequence is MLSVKIELLEALHQALEKLSPGAGSKAVFESPKVAAHGDLATTAAMQLAKPLKLNPRQLAENLRAELLVRAPFERWVEAIDIAGPGFINIKLKPEAKQQTVREVLSQGQQFGSQPGTGKRMLVEFVSANPTGPLHVGHGRQAALGDAICNLYQTQGWAVYREFYYNDAGVQIGTLASSTQLRARGFKPGDPEWPSGENAAAYNGDYIADIAADYLAKKTVHSDDRAFTASGDVEALDDIRLFAVAYLRHEQDLDLKAFAVHFDNYYLESSLYLSGKVDDVVKRLHDAGKTYEHDGALWLKSTEYGDDKDRVMRKGDGSYTYFVPDVAYHISKWERGFEKVVNIQGTDHHGTIARVRAGLQAANVGIPKGYPDYVLHTMVRVVRGGEEVKISKRAGSYVTLRDLIEWTSKDAVRFFLLSRKPDTEYTFDVDLAVAKNNDNPVYYVQYAHARICSVLAAWREKEGGDVASLGQADLSPLQSPQALALLLLLAKYPEMLTAAAAGFAPHDVTFYLRELAACYHSYYDAERILVDDDLIKRARLALVAATAQVLHNGLAVLGVSAPQKM.

The 'HIGH' region motif lies at 128–138; it reads ANPTGPLHVGH.

This sequence belongs to the class-I aminoacyl-tRNA synthetase family. As to quaternary structure, monomer.

The protein localises to the cytoplasm. The enzyme catalyses tRNA(Arg) + L-arginine + ATP = L-arginyl-tRNA(Arg) + AMP + diphosphate. The polypeptide is Arginine--tRNA ligase (Albidiferax ferrireducens (strain ATCC BAA-621 / DSM 15236 / T118) (Rhodoferax ferrireducens)).